We begin with the raw amino-acid sequence, 322 residues long: D-specific alpha-keto acid dehydrogenase (322 aa).

Residues 156-157 (QI), 229-231 (TGR), and Asp255 each bind NAD(+). Residue Arg231 is part of the active site. The active site involves Glu260. His292 functions as the Proton donor in the catalytic mechanism. Residue 292 to 295 (HTAY) coordinates NAD(+).

This sequence belongs to the D-isomer specific 2-hydroxyacid dehydrogenase family.

It carries out the reaction a (2R)-2-hydroxycarboxylate + NADP(+) = a 2-oxocarboxylate + NADPH + H(+). The catalysed reaction is a (2R)-2-hydroxycarboxylate + NAD(+) = a 2-oxocarboxylate + NADH + H(+). It catalyses the reaction (R)-lactate + NADP(+) = pyruvate + NADPH + H(+). The enzyme catalyses (R)-lactate + NAD(+) = pyruvate + NADH + H(+). It carries out the reaction (2R)-hydroxybutanoate + NADP(+) = 2-oxobutanoate + NADPH + H(+). In terms of biological role, required for high-level resistance to glycopeptide antibiotics. Catalyzes the reduction of 2-keto acids to 2-D-hydroxy acids, exhibiting highest catalytic efficiency with pyruvate and 2-oxobutanoate/alpha-ketobutyrate as substrates, producing D-lactate and (2R)-hydroxybutanoate, respectively. Together with D-alanine--D-lactate ligase VanA, gives rise to peptidoglycan precursors that terminate in the depsipeptide D-alanine-D-lactate rather than the dipeptide D-alanine-D-alanine thus preventing vancomycin binding. Shows a slight preference for NADPH over NADH as the electron donor. In Enterococcus faecium (Streptococcus faecium), this protein is D-specific alpha-keto acid dehydrogenase.